The sequence spans 319 residues: Acetyl-coenzyme A carboxylase carboxyl transferase subunit alpha (319 aa).

Residues 35-296 (NLDEEVQRLR…KAQLLIDLAE (262 aa)) enclose the CoA carboxyltransferase C-terminal domain.

It belongs to the AccA family. Acetyl-CoA carboxylase is a heterohexamer composed of biotin carboxyl carrier protein (AccB), biotin carboxylase (AccC) and two subunits each of ACCase subunit alpha (AccA) and ACCase subunit beta (AccD).

Its subcellular location is the cytoplasm. It catalyses the reaction N(6)-carboxybiotinyl-L-lysyl-[protein] + acetyl-CoA = N(6)-biotinyl-L-lysyl-[protein] + malonyl-CoA. It participates in lipid metabolism; malonyl-CoA biosynthesis; malonyl-CoA from acetyl-CoA: step 1/1. Its function is as follows. Component of the acetyl coenzyme A carboxylase (ACC) complex. First, biotin carboxylase catalyzes the carboxylation of biotin on its carrier protein (BCCP) and then the CO(2) group is transferred by the carboxyltransferase to acetyl-CoA to form malonyl-CoA. The polypeptide is Acetyl-coenzyme A carboxylase carboxyl transferase subunit alpha (Photorhabdus laumondii subsp. laumondii (strain DSM 15139 / CIP 105565 / TT01) (Photorhabdus luminescens subsp. laumondii)).